The primary structure comprises 67 residues: Bowman-Birk type major trypsin inhibitor (67 aa).

5 cysteine pairs are disulfide-bonded: Cys8–Cys63, Cys9–Cys24, Cys14–Cys22, Cys31–Cys38, and Cys35–Cys51.

The protein belongs to the Bowman-Birk serine protease inhibitor family.

The polypeptide is Bowman-Birk type major trypsin inhibitor (Setaria italica (Foxtail millet)).